Here is a 728-residue protein sequence, read N- to C-terminus: Catalase-peroxidase 1 (728 aa).

The first 16 residues, 1–16 (MDKAQHTQGKCPVAHG), serve as a signal peptide directing secretion. Residues 97-225 (WHSAGTYRMA…LAAVMMGLIY (129 aa)) constitute a cross-link (tryptophyl-tyrosyl-methioninium (Trp-Tyr) (with M-251)). The active-site Proton acceptor is His98. A cross-link (tryptophyl-tyrosyl-methioninium (Tyr-Met) (with W-97)) is located at residues 225-251 (YVNPEGVDGQPDPLKTAQDIRVTFERM). A heme b-binding site is contributed by His266.

Belongs to the peroxidase family. Peroxidase/catalase subfamily. Homodimer or homotetramer. It depends on heme b as a cofactor. Formation of the three residue Trp-Tyr-Met cross-link is important for the catalase, but not the peroxidase activity of the enzyme.

It catalyses the reaction H2O2 + AH2 = A + 2 H2O. It carries out the reaction 2 H2O2 = O2 + 2 H2O. Functionally, bifunctional enzyme with both catalase and broad-spectrum peroxidase activity. The sequence is that of Catalase-peroxidase 1 from Shewanella frigidimarina (strain NCIMB 400).